Here is a 521-residue protein sequence, read N- to C-terminus: Bifunctional purine biosynthesis protein PurH (521 aa).

The region spanning 1-145 is the MGS-like domain; sequence MIKQALISVS…KNHKDVIVIC (145 aa).

This sequence belongs to the PurH family.

It carries out the reaction (6R)-10-formyltetrahydrofolate + 5-amino-1-(5-phospho-beta-D-ribosyl)imidazole-4-carboxamide = 5-formamido-1-(5-phospho-D-ribosyl)imidazole-4-carboxamide + (6S)-5,6,7,8-tetrahydrofolate. It catalyses the reaction IMP + H2O = 5-formamido-1-(5-phospho-D-ribosyl)imidazole-4-carboxamide. The protein operates within purine metabolism; IMP biosynthesis via de novo pathway; 5-formamido-1-(5-phospho-D-ribosyl)imidazole-4-carboxamide from 5-amino-1-(5-phospho-D-ribosyl)imidazole-4-carboxamide (10-formyl THF route): step 1/1. It functions in the pathway purine metabolism; IMP biosynthesis via de novo pathway; IMP from 5-formamido-1-(5-phospho-D-ribosyl)imidazole-4-carboxamide: step 1/1. The chain is Bifunctional purine biosynthesis protein PurH from Janthinobacterium sp. (strain Marseille) (Minibacterium massiliensis).